Here is a 45-residue protein sequence, read N- to C-terminus: Major cold shock protein (45 aa).

The 45-residue stretch at 1-45 (EKGFGFISTENGQDVFAHFSAIQTNGFKTLEEGQKVAFDVEEGQR) folds into the CSD domain.

Homodimer.

It is found in the cytoplasm. This chain is Major cold shock protein (cspA), found in Streptococcus pyogenes.